The sequence spans 211 residues: Holliday junction branch migration complex subunit RuvA (211 aa).

Residues 1–70 are domain I; the sequence is MIQFLQGQVV…QDQIALFGFG (70 aa). The tract at residues 71–149 is domain II; sequence RLAERDLFGQ…QWHKLQMGTG (79 aa). The tract at residues 150-158 is flexible linker; that stretch reads ETDSTLPTT. Residues 158–211 are domain III; that stretch reads TALLEDLEMTLLALGYTQTEIQQAIAMVSQVPDVAQSEDPEVWIRQAIGWLSDH.

This sequence belongs to the RuvA family. Homotetramer. Forms an RuvA(8)-RuvB(12)-Holliday junction (HJ) complex. HJ DNA is sandwiched between 2 RuvA tetramers; dsDNA enters through RuvA and exits via RuvB. An RuvB hexamer assembles on each DNA strand where it exits the tetramer. Each RuvB hexamer is contacted by two RuvA subunits (via domain III) on 2 adjacent RuvB subunits; this complex drives branch migration. In the full resolvosome a probable DNA-RuvA(4)-RuvB(12)-RuvC(2) complex forms which resolves the HJ.

It localises to the cytoplasm. Functionally, the RuvA-RuvB-RuvC complex processes Holliday junction (HJ) DNA during genetic recombination and DNA repair, while the RuvA-RuvB complex plays an important role in the rescue of blocked DNA replication forks via replication fork reversal (RFR). RuvA specifically binds to HJ cruciform DNA, conferring on it an open structure. The RuvB hexamer acts as an ATP-dependent pump, pulling dsDNA into and through the RuvAB complex. HJ branch migration allows RuvC to scan DNA until it finds its consensus sequence, where it cleaves and resolves the cruciform DNA. In Synechocystis sp. (strain ATCC 27184 / PCC 6803 / Kazusa), this protein is Holliday junction branch migration complex subunit RuvA.